The primary structure comprises 192 residues: Large ribosomal subunit protein bL25 (192 aa).

This sequence belongs to the bacterial ribosomal protein bL25 family. CTC subfamily. In terms of assembly, part of the 50S ribosomal subunit; part of the 5S rRNA/L5/L18/L25 subcomplex. Contacts the 5S rRNA. Binds to the 5S rRNA independently of L5 and L18.

Its function is as follows. This is one of the proteins that binds to the 5S RNA in the ribosome where it forms part of the central protuberance. The polypeptide is Large ribosomal subunit protein bL25 (Cytophaga hutchinsonii (strain ATCC 33406 / DSM 1761 / CIP 103989 / NBRC 15051 / NCIMB 9469 / D465)).